The following is a 125-amino-acid chain: Protein ApaG (125 aa).

The region spanning 1–125 (MIDSPRVCVQ…FRLAVPTFIH (125 aa)) is the ApaG domain.

The protein is Protein ApaG of Enterobacter sp. (strain 638).